The sequence spans 937 residues: Protein translocase subunit SecA (937 aa).

ATP contacts are provided by residues Gln-90, 108 to 112, and Asp-509; that span reads GEGKT.

This sequence belongs to the SecA family. As to quaternary structure, monomer and homodimer. Part of the essential Sec protein translocation apparatus which comprises SecA, SecYEG and auxiliary proteins SecDF. Other proteins may also be involved.

Its subcellular location is the cell inner membrane. The protein resides in the cellular thylakoid membrane. It is found in the cytoplasm. The enzyme catalyses ATP + H2O + cellular proteinSide 1 = ADP + phosphate + cellular proteinSide 2.. Its function is as follows. Part of the Sec protein translocase complex. Interacts with the SecYEG preprotein conducting channel. Has a central role in coupling the hydrolysis of ATP to the transfer of proteins into and across the cell membrane, serving as an ATP-driven molecular motor driving the stepwise translocation of polypeptide chains across the membrane. In terms of biological role, probably participates in protein translocation into and across both the cytoplasmic and thylakoid membranes in cyanobacterial cells. This Synechococcus sp. (strain CC9902) protein is Protein translocase subunit SecA.